The following is a 210-amino-acid chain: Large ribosomal subunit protein uL3 (210 aa).

Residues 131–154 (GPMSHGSKYHRRVGSMGATTDPGR) are disordered.

This sequence belongs to the universal ribosomal protein uL3 family. As to quaternary structure, part of the 50S ribosomal subunit. Forms a cluster with proteins L14 and L19.

Its function is as follows. One of the primary rRNA binding proteins, it binds directly near the 3'-end of the 23S rRNA, where it nucleates assembly of the 50S subunit. The chain is Large ribosomal subunit protein uL3 from Thermoanaerobacter pseudethanolicus (strain ATCC 33223 / 39E) (Clostridium thermohydrosulfuricum).